Reading from the N-terminus, the 953-residue chain is UPF0746 protein DDB_G0281301 (953 aa).

Basic and acidic residues predominate over residues 1-10; it reads MVNNKRKEIE. Positions 1 to 23 are disordered; that stretch reads MVNNKRKEIENQENDNNDDNDGL. A compositionally biased stretch (acidic residues) spans 11 to 21; the sequence is NQENDNNDDND. Positions 35-69 constitute an SAP domain; sequence YDSIRSKELQTIAKSLGLPIIGKKQEIYKRIEGYF.

The protein belongs to the UPF0746 family.

The sequence is that of UPF0746 protein DDB_G0281301 from Dictyostelium discoideum (Social amoeba).